The following is a 322-amino-acid chain: Phosphatidylserine decarboxylase proenzyme (322 aa).

Catalysis depends on charge relay system; for autoendoproteolytic cleavage activity residues aspartate 90, histidine 147, and serine 254. Residue serine 254 is the Schiff-base intermediate with substrate; via pyruvic acid; for decarboxylase activity of the active site. Serine 254 is modified (pyruvic acid (Ser); by autocatalysis). Residues 297-322 (PAPLPAEEIKAEHDASPLVDNKKDDT) form a disordered region. Basic and acidic residues predominate over residues 303 to 322 (EEIKAEHDASPLVDNKKDDT).

It belongs to the phosphatidylserine decarboxylase family. PSD-B subfamily. Prokaryotic type I sub-subfamily. In terms of assembly, heterodimer of a large membrane-associated beta subunit and a small pyruvoyl-containing alpha subunit. Pyruvate is required as a cofactor. Post-translationally, is synthesized initially as an inactive proenzyme. Formation of the active enzyme involves a self-maturation process in which the active site pyruvoyl group is generated from an internal serine residue via an autocatalytic post-translational modification. Two non-identical subunits are generated from the proenzyme in this reaction, and the pyruvate is formed at the N-terminus of the alpha chain, which is derived from the carboxyl end of the proenzyme. The autoendoproteolytic cleavage occurs by a canonical serine protease mechanism, in which the side chain hydroxyl group of the serine supplies its oxygen atom to form the C-terminus of the beta chain, while the remainder of the serine residue undergoes an oxidative deamination to produce ammonia and the pyruvoyl prosthetic group on the alpha chain. During this reaction, the Ser that is part of the protease active site of the proenzyme becomes the pyruvoyl prosthetic group, which constitutes an essential element of the active site of the mature decarboxylase.

It is found in the cell membrane. It carries out the reaction a 1,2-diacyl-sn-glycero-3-phospho-L-serine + H(+) = a 1,2-diacyl-sn-glycero-3-phosphoethanolamine + CO2. Its pathway is phospholipid metabolism; phosphatidylethanolamine biosynthesis; phosphatidylethanolamine from CDP-diacylglycerol: step 2/2. Catalyzes the formation of phosphatidylethanolamine (PtdEtn) from phosphatidylserine (PtdSer). This Salmonella typhi protein is Phosphatidylserine decarboxylase proenzyme.